The primary structure comprises 488 residues: Transcriptional coactivator YAP1 (488 aa).

The span at 1–21 (MEPAQQPPPQPAPQGPAPPSV) shows a compositional bias: pro residues. Residues 1–47 (MEPAQQPPPQPAPQGPAPPSVSPAGTPAAPPAPPAGHQVVHVRGDSE) are disordered. The residue at position 46 (serine 46) is a Phosphoserine. Threonine 48 carries the post-translational modification Phosphothreonine. The stretch at 71–85 (MRLRKLPDSFFKPPE) forms a coiled coil. Lysine 75 carries the post-translational modification N6-lactoyllysine. Positions 76-99 (LPDSFFKPPEPKSHSRQASTDAGT) are disordered. 2 positions are modified to phosphoserine: serine 90 and serine 94. Position 95 is a phosphothreonine (threonine 95). Threonine 104 carries the phosphothreonine; by MAPK8 and MAPK9 modification. Phosphoserine occurs at positions 112, 113, 116, and 123. Phosphoserine; by LATS1 and LATS2 is present on serine 149. WW domains follow at residues 156-189 (VPLPAGWEMAKTSSGQRYFLNHNDQTTTWQDPRK) and 215-248 (GPLPDGWEQAMTQDGEVYYINHKNKTTSWLDPRL). 2 disordered regions span residues 261-293 (SAPVKQPPPLAPQSPQGGVLGGGSSNQQQQIQL) and 339-393 (TLEQ…SSYS). Serine 274 is modified (phosphoserine). The segment at 276-488 (QGGVLGGGSS…LDKESFLTWL (213 aa)) is transactivation domain. Residues 283–344 (GSSNQQQQIQ…SQLPTLEQDG (62 aa)) are a coiled coil. Residues 348-376 (NAVSSPGMSQELRTMTTNSSDPFLNSGTY) show a composition bias toward polar residues. Serine 352 bears the Phosphoserine; by MAPK8 and MAPK9 mark. Serine 356, serine 366, serine 367, and serine 373 each carry phosphoserine. Serine 382 bears the Phosphoserine; by LATS1 and LATS2 mark. Residues 384–393 (DSGLSMSSYS) are compositionally biased toward polar residues. Serine 385 and serine 388 each carry phosphoserine; by CK1. Tyrosine 392 carries the post-translational modification Phosphotyrosine; by ABL1. A Phosphothreonine; by MAPK8 and MAPK9 modification is found at threonine 397.

The protein belongs to the YAP1 family. Part of a complex when phosphorylated that contains DSG3, PKP1, YAP1 and YWHAG; the complex is required for localization of DSG3 and YAP1 to the cell membrane in keratinocytes. Binds to the SH3 domain of the YES kinase. Binds to WBP1 and WBP2. Binds, in vitro, through the WW1 domain, to neural isoforms of ENAH that contain the PPSY motif. The phosphorylated form interacts with YWHAB. Interacts (via WW domains) with LATS1 (via PPxY motif 2). Interacts with LATS2. Interacts (via WW domain 1) with isoform JM-A of ERBB4 (via PPxY motif 2). Interacts with TEAD1, TEAD2 and TEAD3. Interacts with TP73 and HCK. Interacts with RUNX1. Interacts with TEAD4. Interacts (via WW domains) with PTPN14 (via PPxY motif 2); this interaction leads to the cytoplasmic sequestration of YAP1 and inhibits its transcriptional coactivator activity. Interacts (when phosphorylated at Ser-112) with SMAD2, SMAD3 and WWTR1. Interacts with PRRG2 (via cytoplasmic domain). Interacts (via WW domains) with PRRG4 (via cytoplasmic domain). Interacts (phosphorylated) with CLDN18; the interaction sequesters YAP1 away from the nucleus and thereby restricts transcription of YAP1 target genes. Interacts with SMAD1. Interacts with AMOT; the interaction facilitates translocation of YAP1 to the cytoplasm and tight junctions. Interacts with AMOTL2, the interaction is required for ubiquitination of AMOTL2 and localization of YAP1 to tight junctions. Phosphorylated by LATS1 and LATS2; leading to cytoplasmic translocation and inactivation. Phosphorylated by ABL1; leading to YAP1 stabilization, enhanced interaction with TP73 and recruitment onto proapoptotic genes; in response to DNA damage. Phosphorylation at Ser-385 and Ser-388 by CK1 is triggered by previous phosphorylation at Ser-382 by LATS proteins and leads to YAP1 ubiquitination by SCF(beta-TRCP) E3 ubiquitin ligase and subsequent degradation. Phosphorylated at Thr-104, Ser-123, Ser-352 and Thr-397 by MAPK8/JNK1 and MAPK9/JNK2, which is required for the regulation of apoptosis by YAP1. Post-translationally, lactylation by AARS1 promotes nuclear localization and stabilization of YAP1, leading to increased Hippo signaling pathway. Delactylated by SIRT1. In terms of processing, ubiquitinated by SCF(beta-TRCP) E3 ubiquitin ligase. Isoforms lacking the transactivation domain seen in striatal neurons (at protein level). Ubiquitous. Isoform 2 is expressed at higher levels in the neural tissues. In the embryo, it is expressed in brain, eye, and the maxillary and frontonasal components of the primary palate.

It is found in the cytoplasm. Its subcellular location is the nucleus. The protein resides in the cell junction. The protein localises to the tight junction. It localises to the cell membrane. In terms of biological role, transcriptional regulator with dual roles as a coactivator and corepressor. Critical downstream regulatory target in the Hippo signaling pathway, crucial for organ size control and tumor suppression by restricting proliferation and promoting apoptosis. The Hippo signaling pathway core involves a kinase cascade featuring STK3/MST2 and STK4/MST1, along with its regulatory partner SAV1, which phosphorylates and activates LATS1/2 in complex with their regulatory protein, MOB1. This activation leads to the phosphorylation and inactivation of the YAP1 oncoprotein and WWTR1/TAZ. Phosphorylation of YAP1 by LATS1/2 prevents its nuclear translocation, thereby regulating the expression of its target genes. The transcriptional regulation of gene expression requires TEAD transcription factors and modulates cell growth, anchorage-independent growth, and induction of epithelial-mesenchymal transition (EMT). Plays a key role in tissue tension and 3D tissue shape by regulating the cortical actomyosin network, acting via ARHGAP18, a Rho GTPase activating protein that suppresses F-actin polymerization. It also suppresses ciliogenesis by acting as a transcriptional corepressor of TEAD4 target genes AURKA and PLK1. In conjunction with WWTR1, regulates TGFB1-dependent SMAD2 and SMAD3 nuclear accumulation. Synergizes with WBP2 to enhance PGR activity. The sequence is that of Transcriptional coactivator YAP1 (Yap1) from Mus musculus (Mouse).